Consider the following 72-residue polypeptide: Prophage late control protein OgrK (72 aa).

Cryptic version of the phage P2 OGR protein which acts as an activator of P2 late transcription. In Escherichia coli (strain K12), this protein is Prophage late control protein OgrK (ogrK).